The sequence spans 987 residues: Pentatricopeptide repeat-containing protein At1g06710, mitochondrial (987 aa).

The N-terminal 42 residues, 1–42 (MNKTVVRCLLSRSHHPLIHFSTNLSLLHRVFTCSRYLTARFM), are a transit peptide targeting the mitochondrion. 22 PPR repeats span residues 164-198 (TAPV…DKEV), 199-233 (FGEF…RFRP), 234-268 (SRST…NLRM), 269-299 (DGFT…ENFV), 301-335 (DTVF…SCLP), 336-370 (NVVT…GCYP), 371-405 (SPKI…GHMP), 406-446 (GYVV…GVVL), 447-481 (NKIN…GFIP), 482-516 (DTST…GLVA), 517-551 (DVYT…GCTP), 552-586 (NVVT…GCLP), 587-621 (NIVT…KDVP), 638-672 (NVVT…GCEP), 673-707 (NQIV…GFPA), 708-742 (TLYT…SCAP), 743-777 (NVVI…GCQP), 778-812 (NVVT…GVAP), 813-847 (NYVT…HWPT), 881-915 (FLSV…SATL), 918-952 (YSST…GVIP), and 953-987 (EMQS…VCPL).

The protein belongs to the PPR family. P subfamily.

It localises to the mitochondrion. The protein is Pentatricopeptide repeat-containing protein At1g06710, mitochondrial of Arabidopsis thaliana (Mouse-ear cress).